The sequence spans 167 residues: UPF0179 protein PAE0681 (167 aa).

The tract at residues 142-167 is disordered; that stretch reads PSPSGSSISATSQGPSRAPPSRRLLK. Positions 145 to 157 are enriched in low complexity; sequence SGSSISATSQGPS.

The protein belongs to the UPF0179 family.

This is UPF0179 protein PAE0681 from Pyrobaculum aerophilum (strain ATCC 51768 / DSM 7523 / JCM 9630 / CIP 104966 / NBRC 100827 / IM2).